A 240-amino-acid chain; its full sequence is MKIVEVKNLTYRINDFEILKNVTFSVEEGEFVGIIGPNGAGKTTLVRILVGDIKNYEGKVEVRGKIGYLPQLHQVQREFPITVKEFAAMGMYGRYRKIDWEKVRSTLKDVGILHKENDPIKNLSGGEFQRLSLARALLSDPDILVLDEPEAGVDEMGKASFYELLNRLRKEKNITVIMVSHDIGMVFKECSTIMCLNRTLHCHGPTETINPEDLKKIFTDFDIWIRGTRHYEIYHGRERD.

Residues 4–223 enclose the ABC transporter domain; the sequence is VEVKNLTYRI…LKKIFTDFDI (220 aa). Residue 36–43 coordinates ATP; the sequence is GPNGAGKT.

Belongs to the ABC transporter superfamily.

Its function is as follows. Part of an ATP-driven transport system TM_0123/TM_0124/TM_0125 for a metal. Probably responsible for energy coupling to the transport system. This chain is Probable metal transport system ATP-binding protein TM_0124, found in Thermotoga maritima (strain ATCC 43589 / DSM 3109 / JCM 10099 / NBRC 100826 / MSB8).